Reading from the N-terminus, the 461-residue chain is Deoxyhypusine synthase (461 aa).

Spermidine-binding positions include 166–167, Glu331, His377, 403–405, and 412–418; these read EH, GSD, and EAVSWGK. Catalysis depends on Lys418, which acts as the Nucleophile. The helical transmembrane segment at 428–448 threads the bilayer; the sequence is VYSEVTIVFPLIVVHVFVAWV.

It belongs to the deoxyhypusine synthase family. As to quaternary structure, heterotetramer formed by a homodimer of the non-catalytic regulatory subunit DHSp and a homodimer of the catalytic subunit DHSc where DHSc appears to bind spermidine and DHSp appears to bind NAD(+). The cofactor is NAD(+).

The protein resides in the membrane. It carries out the reaction [eIF5A protein]-L-lysine + spermidine = [eIF5A protein]-deoxyhypusine + propane-1,3-diamine. It functions in the pathway protein modification; eIF5A hypusination. Its activity is regulated as follows. Allosterically activated by DHSp. Inhibited by spermididine analog N1-guanyl-1,7-diamineoheptane (GC7). In terms of biological role, in association with the non-catalytic regulatory subunit DHSp, catalyzes the NAD-dependent oxidative cleavage of spermidine and the subsequent transfer of the butylamine moiety of spermidine to the epsilon-amino group of a specific lysine residue of the eIF5A precursor protein to form the intermediate deoxyhypusine residue. Regulates protein levels of its regulatory subunit DHSp. Required for cell growth and survival. This is Deoxyhypusine synthase from Trypanosoma brucei brucei (strain 927/4 GUTat10.1).